The primary structure comprises 212 residues: Thymidylate kinase (212 aa).

Position 11 to 18 (glycine 11 to threonine 18) interacts with ATP.

Belongs to the thymidylate kinase family.

The enzyme catalyses dTMP + ATP = dTDP + ADP. Phosphorylation of dTMP to form dTDP in both de novo and salvage pathways of dTTP synthesis. This Streptococcus pneumoniae (strain P1031) protein is Thymidylate kinase.